The following is a 963-amino-acid chain: Unconventional myosin-XIX (963 aa).

In terms of domain architecture, Myosin motor spans 35-758 (HQLDDLTKVN…MLELLECGRA (724 aa)). 132-139 (GESGAGKT) serves as a coordination point for ATP. Residues 602 to 624 (LEQLLQVLHNTTPHYIRCIKPNS) form an actin-binding region. IQ domains lie at 762-782 (EQCARCIQCGWRRHRLQKQEK) and 783-812 (QRRAAVLIQAAFRSWLTRKHIRRLHIAATV). The segment at 829 to 963 (SKELDGMEEK…LLESHRPVQV (135 aa)) is myMOMA region.

It belongs to the TRAFAC class myosin-kinesin ATPase superfamily. Myosin family. In terms of assembly, myosin is a hexamer of 2 heavy chains and 4 light chains: interacts with myosin light chains MYL9 and MYL12B.

The protein localises to the mitochondrion outer membrane. It localises to the cytoplasm. It is found in the cytoskeleton. Functionally, actin-based motor molecule with ATPase activity that localizes to the mitochondrion outer membrane. Motor protein that moves towards the plus-end of actin filaments. Required for mitochondrial inheritance during mitosis. May be involved in mitochondrial transport or positioning. The protein is Unconventional myosin-XIX of Mus musculus (Mouse).